Reading from the N-terminus, the 132-residue chain is MNNDAISTTVTSIRNANTKRKAMTRIPVTKMTRGIVQILLEEGFLKSVTEHTEGGKIFMDVKLRYFGKEKKPYVATIRYISKPGLRIYCDHIRIPKILGGMGIAILSTSYGLITDREARRRKTGGEILCHIW.

This sequence belongs to the universal ribosomal protein uS8 family. Part of the 30S ribosomal subunit.

It localises to the plastid. It is found in the chloroplast. Functionally, one of the primary rRNA binding proteins, it binds directly to 16S rRNA central domain where it helps coordinate assembly of the platform of the 30S subunit. This chain is Small ribosomal subunit protein uS8c (rps8), found in Adiantum capillus-veneris (Maidenhair fern).